Reading from the N-terminus, the 293-residue chain is uncharacterized protein (293 aa).

A disordered region spans residues Met-1–Gly-22. The helical transmembrane segment at Leu-25–Val-45 threads the bilayer. A disordered region spans residues Gly-243–Ala-265. Over residues Gln-248 to Ala-265 the composition is skewed to polar residues.

The protein localises to the membrane. This is an uncharacterized protein from Mycobacterium tuberculosis (strain CDC 1551 / Oshkosh).